A 765-amino-acid polypeptide reads, in one-letter code: Probable exo-1,4-beta-xylosidase bxlB (765 aa).

The first 25 residues, 1 to 25 (MYSSNSRRAASILACIVSLTQLGFA), serve as a signal peptide directing secretion. Residues N67 and N107 are each glycosylated (N-linked (GlcNAc...) asparagine). D293 is a catalytic residue. N-linked (GlcNAc...) asparagine glycans are attached at residues N345, N412, N423, N464, and N761.

This sequence belongs to the glycosyl hydrolase 3 family.

The protein localises to the secreted. The catalysed reaction is Hydrolysis of (1-&gt;4)-beta-D-xylans, to remove successive D-xylose residues from the non-reducing termini.. It functions in the pathway glycan degradation; xylan degradation. Its function is as follows. Xylan 1,4-beta-xylosidase involved in the hydrolysis of xylan, a major structural heterogeneous polysaccharide found in plant biomass representing the second most abundant polysaccharide in the biosphere, after cellulose. The chain is Probable exo-1,4-beta-xylosidase bxlB (bxlB) from Aspergillus terreus (strain NIH 2624 / FGSC A1156).